The chain runs to 156 residues: Rhombotin-1 (156 aa).

LIM zinc-binding domains are found at residues 22–84 and 86–148; these read KGCA…LFGT and GNCA…GQLN.

As to expression, expressed in the brain and not in the thymus.

Its subcellular location is the nucleus. In terms of biological role, may be involved in gene regulation within neural lineage cells potentially by direct DNA binding or by binding to other transcription factors. This is Rhombotin-1 (LMO1) from Bos taurus (Bovine).